The primary structure comprises 202 residues: Small heat shock protein hspG5 (202 aa).

One can recognise a sHSP domain in the interval 31–202 (KTIIDIIPPM…YSNTIKININ (172 aa)). The disordered stretch occupies residues 96-138 (TSSTTLDSKEDEASIEEFEDDIKPKSKSTVTTTATKENKEDEN).

The protein belongs to the small heat shock protein (HSP20) family.

The polypeptide is Small heat shock protein hspG5 (hspG5) (Dictyostelium discoideum (Social amoeba)).